A 208-amino-acid chain; its full sequence is FMN-dependent NADH:quinone oxidoreductase 1 (208 aa).

The protein belongs to the azoreductase type 1 family. As to quaternary structure, homodimer. The cofactor is FMN.

The enzyme catalyses 2 a quinone + NADH + H(+) = 2 a 1,4-benzosemiquinone + NAD(+). The catalysed reaction is N,N-dimethyl-1,4-phenylenediamine + anthranilate + 2 NAD(+) = 2-(4-dimethylaminophenyl)diazenylbenzoate + 2 NADH + 2 H(+). In terms of biological role, quinone reductase that provides resistance to thiol-specific stress caused by electrophilic quinones. Also exhibits azoreductase activity. Catalyzes the reductive cleavage of the azo bond in aromatic azo compounds to the corresponding amines. This is FMN-dependent NADH:quinone oxidoreductase 1 from Bacillus licheniformis (strain ATCC 14580 / DSM 13 / JCM 2505 / CCUG 7422 / NBRC 12200 / NCIMB 9375 / NCTC 10341 / NRRL NRS-1264 / Gibson 46).